We begin with the raw amino-acid sequence, 154 residues long: Urease accessory protein UreE (154 aa).

The disordered stretch occupies residues 134–154 (PESGAYGKSGHNHGHSHSHED). A compositionally biased stretch (basic residues) spans 143–154 (GHNHGHSHSHED).

It belongs to the UreE family.

It localises to the cytoplasm. Functionally, involved in urease metallocenter assembly. Binds nickel. Probably functions as a nickel donor during metallocenter assembly. In Alteromonas mediterranea (strain DSM 17117 / CIP 110805 / LMG 28347 / Deep ecotype), this protein is Urease accessory protein UreE.